The primary structure comprises 149 residues: Transcriptional repressor NrdR (149 aa).

A zinc finger spans residues 3–34; sequence CPFCDTEETKVIDSRLVSDGYQVRRRRECGHC. The 91-residue stretch at 49 to 139 folds into the ATP-cone domain; that stretch reads PKIIKTDGTR…VYLSFDDIDQ (91 aa).

The protein belongs to the NrdR family. It depends on Zn(2+) as a cofactor.

Functionally, negatively regulates transcription of bacterial ribonucleotide reductase nrd genes and operons by binding to NrdR-boxes. The polypeptide is Transcriptional repressor NrdR (Haemophilus influenzae (strain PittEE)).